Consider the following 346-residue polypeptide: Probable electron transfer flavoprotein subunit alpha, mitochondrial (346 aa).

285–313 (LYVAIGISGAIQHLAGMKESKMIIAINKD) provides a ligand contact to FAD.

Belongs to the ETF alpha-subunit/FixB family. Heterodimer of an alpha and a beta subunit. Requires FAD as cofactor.

The protein localises to the mitochondrion matrix. Its function is as follows. The electron transfer flavoprotein serves as a specific electron acceptor for several dehydrogenases, including five acyl-CoA dehydrogenases, glutaryl-CoA and sarcosine dehydrogenase. It transfers the electrons to the main mitochondrial respiratory chain via ETF-ubiquinone oxidoreductase (ETF dehydrogenase). The chain is Probable electron transfer flavoprotein subunit alpha, mitochondrial (ETF1) from Cryptococcus neoformans var. neoformans serotype D (strain B-3501A) (Filobasidiella neoformans).